A 184-amino-acid polypeptide reads, in one-letter code: Acireductone dioxygenase (184 aa).

4 residues coordinate Fe(2+): His97, His99, Glu103, and His141. Positions 97, 99, 103, and 141 each coordinate Ni(2+).

The protein belongs to the acireductone dioxygenase (ARD) family. As to quaternary structure, monomer. Requires Fe(2+) as cofactor. It depends on Ni(2+) as a cofactor.

The enzyme catalyses 1,2-dihydroxy-5-(methylsulfanyl)pent-1-en-3-one + O2 = 3-(methylsulfanyl)propanoate + CO + formate + 2 H(+). It carries out the reaction 1,2-dihydroxy-5-(methylsulfanyl)pent-1-en-3-one + O2 = 4-methylsulfanyl-2-oxobutanoate + formate + 2 H(+). It participates in amino-acid biosynthesis; L-methionine biosynthesis via salvage pathway; L-methionine from S-methyl-5-thio-alpha-D-ribose 1-phosphate: step 5/6. Its function is as follows. Catalyzes 2 different reactions between oxygen and the acireductone 1,2-dihydroxy-3-keto-5-methylthiopentene (DHK-MTPene) depending upon the metal bound in the active site. Fe-containing acireductone dioxygenase (Fe-ARD) produces formate and 2-keto-4-methylthiobutyrate (KMTB), the alpha-ketoacid precursor of methionine in the methionine recycle pathway. Ni-containing acireductone dioxygenase (Ni-ARD) produces methylthiopropionate, carbon monoxide and formate, and does not lie on the methionine recycle pathway. The sequence is that of Acireductone dioxygenase from Parvibaculum lavamentivorans (strain DS-1 / DSM 13023 / NCIMB 13966).